Here is a 154-residue protein sequence, read N- to C-terminus: Urease accessory protein UreE (154 aa).

It belongs to the UreE family.

The protein resides in the cytoplasm. Functionally, involved in urease metallocenter assembly. Binds nickel. Probably functions as a nickel donor during metallocenter assembly. This chain is Urease accessory protein UreE, found in Prochlorococcus marinus subsp. pastoris (strain CCMP1986 / NIES-2087 / MED4).